A 263-amino-acid chain; its full sequence is Undecaprenyl-diphosphatase (263 aa).

The next 7 helical transmembrane spans lie at 38–58 (RSDF…CLAL), 75–95 (RDYV…GLIV), 108–128 (PVAW…HFAG), 135–155 (VVTW…GVFP), 181–201 (FVFM…LLEM), 217–237 (VAFI…LGYI), and 242–262 (FTVF…WLPA).

Belongs to the UppP family.

The protein localises to the cell inner membrane. It carries out the reaction di-trans,octa-cis-undecaprenyl diphosphate + H2O = di-trans,octa-cis-undecaprenyl phosphate + phosphate + H(+). Its function is as follows. Catalyzes the dephosphorylation of undecaprenyl diphosphate (UPP). Confers resistance to bacitracin. The polypeptide is Undecaprenyl-diphosphatase (Xanthomonas campestris pv. campestris (strain 8004)).